The primary structure comprises 132 residues: 3-aminoacrylate deaminase RutC (132 aa).

The protein belongs to the RutC family.

The enzyme catalyses (Z)-3-aminoacrylate + H2O + H(+) = 3-oxopropanoate + NH4(+). Functionally, involved in pyrimidine catabolism. Catalyzes the deamination of 3-aminoacrylate to malonic semialdehyde, a reaction that can also occur spontaneously. RutC may facilitate the reaction and modulate the metabolic fitness, rather than catalyzing essential functions. The sequence is that of 3-aminoacrylate deaminase RutC from Cronobacter sakazakii (strain ATCC BAA-894) (Enterobacter sakazakii).